A 164-amino-acid polypeptide reads, in one-letter code: NADH-quinone oxidoreductase subunit I (164 aa).

2 consecutive 4Fe-4S ferredoxin-type domains span residues 55 to 85 and 95 to 124; these read LRRYPNGEERCIACKLCEAICPAQAITIDAE and TRYDIDMTKCIYCGFCQEACPVDAIVEGPN. Positions 65, 68, 71, 75, 104, 107, 110, and 114 each coordinate [4Fe-4S] cluster.

It belongs to the complex I 23 kDa subunit family. As to quaternary structure, NDH-1 is composed of 14 different subunits. Subunits NuoA, H, J, K, L, M, N constitute the membrane sector of the complex. [4Fe-4S] cluster is required as a cofactor.

It is found in the cell inner membrane. It catalyses the reaction a quinone + NADH + 5 H(+)(in) = a quinol + NAD(+) + 4 H(+)(out). In terms of biological role, NDH-1 shuttles electrons from NADH, via FMN and iron-sulfur (Fe-S) centers, to quinones in the respiratory chain. The immediate electron acceptor for the enzyme in this species is believed to be ubiquinone. Couples the redox reaction to proton translocation (for every two electrons transferred, four hydrogen ions are translocated across the cytoplasmic membrane), and thus conserves the redox energy in a proton gradient. In Dinoroseobacter shibae (strain DSM 16493 / NCIMB 14021 / DFL 12), this protein is NADH-quinone oxidoreductase subunit I.